Here is a 289-residue protein sequence, read N- to C-terminus: ATP synthase mitochondrial F1 complex assembly factor 2 (289 aa).

The N-terminal 40 residues, 1 to 40 (MWRRCLRLRDVGRRLLNLPRSGLTASEGLGPKLPTPIRAY), are a transit peptide targeting the mitochondrion. N6-succinyllysine is present on Lys-133.

The protein belongs to the ATP12 family. Interacts with ATP5F1B; involved in the assembly of the F1 component of the mitochondrial ATP synthase (ATPase). Interacts with FMC1.

The protein localises to the mitochondrion inner membrane. In terms of biological role, plays a role in the assembly of the F1 component of the mitochondrial ATP synthase (ATPase). The polypeptide is ATP synthase mitochondrial F1 complex assembly factor 2 (ATPAF2) (Bos taurus (Bovine)).